The primary structure comprises 242 residues: Adenosylcobinamide-GDP ribazoletransferase (242 aa).

5 helical membrane passes run 31-51 (LLFY…LSTA), 52-72 (LMGA…VLLS), 109-129 (IAVV…VALI), 134-154 (GAAL…LFLT), and 188-208 (ILIG…CFIG).

It belongs to the CobS family. Mg(2+) is required as a cofactor.

Its subcellular location is the cell inner membrane. It carries out the reaction alpha-ribazole + adenosylcob(III)inamide-GDP = adenosylcob(III)alamin + GMP + H(+). The catalysed reaction is alpha-ribazole 5'-phosphate + adenosylcob(III)inamide-GDP = adenosylcob(III)alamin 5'-phosphate + GMP + H(+). The protein operates within cofactor biosynthesis; adenosylcobalamin biosynthesis; adenosylcobalamin from cob(II)yrinate a,c-diamide: step 7/7. Its function is as follows. Joins adenosylcobinamide-GDP and alpha-ribazole to generate adenosylcobalamin (Ado-cobalamin). Also synthesizes adenosylcobalamin 5'-phosphate from adenosylcobinamide-GDP and alpha-ribazole 5'-phosphate. The sequence is that of Adenosylcobinamide-GDP ribazoletransferase from Pseudomonas fluorescens (strain SBW25).